A 196-amino-acid polypeptide reads, in one-letter code: Adenylate kinase (196 aa).

Position 9–17 (9–17) interacts with ATP; that stretch reads GIPGVGKST.

Belongs to the archaeal adenylate kinase family.

The protein localises to the cytoplasm. It catalyses the reaction AMP + ATP = 2 ADP. The protein is Adenylate kinase (adkA) of Pyrococcus horikoshii (strain ATCC 700860 / DSM 12428 / JCM 9974 / NBRC 100139 / OT-3).